Here is a 416-residue protein sequence, read N- to C-terminus: Phosphoribosylamine--glycine ligase (416 aa).

The region spanning 105–310 is the ATP-grasp domain; the sequence is KSFLKKYRIK…PLELILAATQ (206 aa). Residue 131–192 coordinates ATP; that stretch reads IYSLTPPIVV…EEFLDGYELS (62 aa). E281 and N283 together coordinate Mg(2+).

It belongs to the GARS family. The cofactor is Mg(2+). Requires Mn(2+) as cofactor.

It carries out the reaction 5-phospho-beta-D-ribosylamine + glycine + ATP = N(1)-(5-phospho-beta-D-ribosyl)glycinamide + ADP + phosphate + H(+). Its pathway is purine metabolism; IMP biosynthesis via de novo pathway; N(1)-(5-phospho-D-ribosyl)glycinamide from 5-phospho-alpha-D-ribose 1-diphosphate: step 2/2. This Campylobacter jejuni subsp. jejuni serotype O:2 (strain ATCC 700819 / NCTC 11168) protein is Phosphoribosylamine--glycine ligase.